Reading from the N-terminus, the 493-residue chain is Lysine--tRNA ligase (493 aa).

The Mg(2+) site is built by Glu402 and Glu409.

It belongs to the class-II aminoacyl-tRNA synthetase family. As to quaternary structure, homodimer. Mg(2+) serves as cofactor.

Its subcellular location is the cytoplasm. It catalyses the reaction tRNA(Lys) + L-lysine + ATP = L-lysyl-tRNA(Lys) + AMP + diphosphate. This chain is Lysine--tRNA ligase, found in Fusobacterium nucleatum subsp. nucleatum (strain ATCC 25586 / DSM 15643 / BCRC 10681 / CIP 101130 / JCM 8532 / KCTC 2640 / LMG 13131 / VPI 4355).